The following is a 104-amino-acid chain: Naphthalene 1,2-dioxygenase system, ferredoxin component (104 aa).

The Rieske domain maps to 6–101 (IEAVALSDIL…VKIENLRVMI (96 aa)). [2Fe-2S] cluster is bound by residues C45, H47, C64, and H67.

The protein belongs to the bacterial ring-hydroxylating dioxygenase ferredoxin component family. The naphthalene dioxygenase (NDO) multicomponent enzyme system is composed of an electron transfer component and a dioxygenase component (iron sulfur protein (ISP)). The electron transfer component is composed of a ferredoxin reductase (NdoR) and a ferredoxin (NdoA), and the dioxygenase component is formed of a heterohexamer (trimer of heterodimers) of three large alpha subunits (NdoB) and three small beta subunits (NdoC). Requires [2Fe-2S] cluster as cofactor.

It functions in the pathway aromatic compound metabolism; naphthalene degradation. Its function is as follows. Component of the naphthalene dioxygenase (NDO) multicomponent enzyme system which catalyzes the incorporation of both atoms of molecular oxygen into naphthalene to form cis-(1R,2S)-dihydroxy-1,2-dihydronaphthalene. Functions as an intermediate electron transfer protein via a specific interaction with iron sulfur protein components (ISP) (NdoB and NdoC). Also able to catalyze the cis-dihydroxylation of biphenyl and phenanthrene. This Pseudomonas putida (Arthrobacter siderocapsulatus) protein is Naphthalene 1,2-dioxygenase system, ferredoxin component.